Reading from the N-terminus, the 547-residue chain is Ribosome protection protein VmlR (547 aa).

The ABC transporter 1 domain occupies 5–200 (VTLTNVSYEV…FREKKRLTQQ (196 aa)). 37 to 44 (GKNGAGKS) contacts ATP. The antibiotic resistance domain (ARD) stretch occupies residues 183–289 (GNYSGYMKFR…SIDTTHKTGK (107 aa)). Coiled-coil stretches lie at residues 193-222 (EKKR…GLAS) and 245-269 (AKRT…AKAE). Residues 292 to 504 (LEVQNVTKAF…REELRLKLET (213 aa)) enclose the ABC transporter 2 domain. 324 to 331 (GPNGSGKT) contacts ATP. A C-terminal extension (CTE) region spans residues 483 to 547 (KQLNDVPSER…KELDHQDKKD (65 aa)). The stretch at 488–543 (VPSERNEREELRLKLETERQEVLGKLSFMTPNDKGYKELDQAFNELTKRIKELDHQ) forms a coiled coil.

The protein belongs to the ABC transporter superfamily. ABCF family. ARE2 subfamily. As to quaternary structure, binds within the E-site of the 70S ribosome, where it contacts ribosomal proteins L1, L5, L33-1, S7, S11, the 16 and 23S rRNAs and the acceptor arm of the P-site tRNA.

The protein localises to the cytoplasm. Recognizes and binds in the vacant E-site of ribosomes stalled by some peptidyltransferase center (PTC)-targeting antibiotics. Makes contact with the PTC and both ribosomal subunits. Induces conformational changes in the P-site, which allows it to dislodge the antibiotic from its PTC binding site. Binds to ribosomes either directly following translation initation or subsequent to E tRNA release during elongation. Involved in resistance to a narrow spectrum of antibiotics (the streptogramin A antibiotic virginiamycin M, the lincosamide antibiotic lincomycin and the pleuromutilin antibiotic tiamulin). The sequence is that of Ribosome protection protein VmlR from Bacillus subtilis (strain 168).